The following is a 2231-amino-acid chain: MNSNNPDNNNSNNINNNNKDKDIAPNSDVQLATVYTKAKSYIPQIEQVYQGTNPNIQEAKLLGELLQVLAEVPKGTHLFCDPILEPISIFSLTIFSFNEEATATWLKNHFNPILSVCDKCILNFARGKCKMLQHFAIQRHVPHEHVAKFNDIVCQWRVEAVFPILRNISVNDNTGINITNEIETAMYECLCNPHMLRLNKQLKATFEAIFKFFYDTKHRLLDVTNPLSIKTFISGVIFCWCEGSKEENEWSRAFLKDLYSRNFHINLSNLTPDIIEEVYIHILFLQNPANWTEIVVSQFWSRLLPVFNLFDKDVFIEYFQVPKNVESLKKTFKFPLEPIFKMWYNHLSKSYHDKPLDFLLRGLTMFLNKFGSEFWSKIEPFTFHSILDIIFNRDSFPIKLIKIQDNPIVEHQTEVYFQLTGSVTDLLSWTLPFYHALSPSKRIQMVRKVSMAFLRIIANYPSLKSIPKACLMNSATALLRAVLTIKENERAMLYKNDEFETVLLTKTDSRALLNNPLIQDIIIRSASNPNDFYPGLGAASASVATSTMMVLAECIDFDILLLCHRTFKLYSGKPISEIPISTNVLENVTNKIDLRSFHDGPLLAKQLLVSLKNINGLLIVPSNTAVAEAHNALNQKFLLLSTRLMEKFADILPGQLSKILADEDASQGFWSCIFSSDKHLYQAATNILYNTFDVEGRLEGILAILNSNLTVNLKNINVMLQRLINCEFYEPCPRAVRVLMDVVSAFVDPISGVFANFQTLKSQNTEKEFLKFWESCWLFLDTIYKFTLKWASKYDYSELENFTKDTLDLSRSLVDSFREFSDILHDQTKNLLLNVLETFKNMLYWLRLSDEVLLESCVRLIISTSDLAHEKHVKVDDSLVEMMAKYASKAKRFSNKLTEQQASEILQKAKIFNKALTEEVATEAENYRKEKELSRLGKVIDLTDSVPASPSLSPSLSSTIASSSAESRADYLQRKALSSSITGRPRVAQPKITSFGTFQSSANAKLHRTKPVKPLSKMELARMQLLNNRVVHPPSAPAFHTKSRGLSNKNDDSSSEESDNDIESARELFAIAKAKGKGIQTVDINGKVVKRQTAAELAKQELEHMRKRLNVDMNPLYEIILQWDYTRNSEYPDDEPIGNYSDVKDFFNSPADYQKVMKPLLLLESWQGLCSSRDREDYKPFSIIVGNRTAVSDFYDVYASVAKQVIQDCGISESDLIVMAYLPDFRPDKRLSSDDFKKAQHTCLAKVRTLKNTKGGNVDVTLRIHRNHSFSKFLTLRSEIYCVKVMQMTTIEREYSTLEGLEYYDLVGQILQAKPSPPVNVDAAEIETVKKSYKLNTSQAEAIVNSVSKEGFSLIQGPPGTGKTKTILGIIGYFLSTKNASSSNVIKVPLEKNSSNTEQLLKKQKILICAPSNAAVDEICLRLKSGVYDKQGHQFKPQLVRVGRSDVVNVAIKDLTLEELVDKRIGERNYEIRTDPELERKFNNAVTKRRELRGKLDSESGNPESPMSTEDISKLQLKIRELSKIINELGRDRDEMREKNSVNYRNRDLDRRNAQAHILAVSDIICSTLSGSAHDVLATMGIKFDTVIIDEACQCTELSSIIPLRYGGKRCIMVGDPNQLPPTVLSGAASNFKYNQSLFVRMEKNSSPYLLDVQYRMHPSISKFPSSEFYQGRLKDGPGMDILNKRPWHQLEPLAPYKFFDIISGRQEQNAKTMSYTNMEEIRVAIELVDYLFRKFDNKIDFTGKIGIISPYREQMQKMRKEFARYFGGMINKSIDFNTIDGFQGQEKEIILISCVRADDTKSSVGFLKDFRRMNVALTRAKTSIWVLGHQRSLAKSKLWRDLIEDAKDRSCLAYACSGFLDPRNNRAQSILRKFNVPVPSEQEDDYKLPMEYITQGPDEVKSNKDTKKRRVVDEGEEADKAVKKKKKEKKKEKKKSKADDKKKNNKKAESPSTSSGTKKKSSIFGGMSVPSAVVPKTFPDVDSNKKAAAVVGKKKNNKHVCFSDDVSFIPRNDEPEIKVTRSLSSVLKEKQLGLKETRTISPPEISNNEDDDDEDDYTPSISDSSLMKSEANGRNNRVASHNQNFSASIYDDPQVSQAKQTQVPAAITKHRSSNSVLSGGSSRILTASDYGEPNQNGQNGANRTLSQHVGNANQYSTAPVGTGELHETLPAHPQDSYPAEAEDPYDLNPHPQPQSSAFKGPGSGPTGTRNSSRRNASSSPFIPKKRKPRS.

A compositionally biased stretch (low complexity) spans 1 to 17 (MNSNNPDNNNSNNINNN). 2 disordered regions span residues 1–24 (MNSN…KDIA) and 1032–1061 (HPPS…SDND). ATP is bound by residues Gln1339 and 1360–1364 (GTGKT). The segment at 1491-1511 (ELRGKLDSESGNPESPMSTED) is disordered. The segment covering 1499–1510 (ESGNPESPMSTE) has biased composition (polar residues). Gln1619, Tyr1655, and Glu1787 together coordinate ATP. Disordered stretches follow at residues 1894–1993 (ITQG…AVVG) and 2032–2231 (QLGL…KPRS). Positions 1909–1927 (KRRVVDEGEEADKAVKKKK) match the Nuclear localization signal motif. Over residues 1923–1937 (VKKKKKEKKKEKKKS) the composition is skewed to basic residues. Positions 1938–1950 (KADDKKKNNKKAE) are enriched in basic and acidic residues. Residues 2048–2058 (NNEDDDDEDDY) show a composition bias toward acidic residues. Composition is skewed to polar residues over residues 2060-2088 (PSIS…NFSA) and 2095-2104 (QVSQAKQTQV). A compositionally biased stretch (low complexity) spans 2114-2123 (SNSVLSGGSS). Over residues 2134-2160 (PNQNGQNGANRTLSQHVGNANQYSTAP) the composition is skewed to polar residues. The span at 2210 to 2220 (RNSSRRNASSS) shows a compositional bias: low complexity.

Belongs to the DNA2/NAM7 helicase family. In terms of assembly, interacts with RAD2, RNT1 and RPB1. Binds to multiple snoRNAs.

Its subcellular location is the nucleus. Functionally, ATP-dependent 5'-&gt;3' DNA/RNA helicase required for the expression and maturation of diverse classes of non-protein-coding RNAs like precursor tRNAs, rRNAs and small nuclear (snRNA) and nucleolar (snoRNA) RNAs. Directs RNA polymerase II transcription termination on snoRNAs as well as on several short protein-coding genes. May also play a role in transcription-coupled nucleotide excision repair. The protein is Helicase SEN1 (SEN1) of Saccharomyces cerevisiae (strain ATCC 204508 / S288c) (Baker's yeast).